The following is a 218-amino-acid chain: CD99 antigen-like protein 2 (218 aa).

Residues Met1 to Gly25 form the signal peptide. The Extracellular segment spans residues Asp26–Gly136. Residues Leu72–Gly128 form a disordered region. 2 stretches are compositionally biased toward basic and acidic residues: residues Leu76 to Arg87 and Tyr110 to Gly119. O-linked (Xyl...) (chondroitin sulfate) serine glycosylation occurs at Ser129. Residues Thr137–Ile157 form a helical membrane-spanning segment. Over Ser158–Ile218 the chain is Cytoplasmic.

The protein belongs to the CD99 family. In terms of processing, O-glycosylated.

It localises to the cell membrane. It is found in the cell junction. The protein localises to the secreted. Its function is as follows. Plays a role in a late step of leukocyte extravasation helping cells to overcome the endothelial basement membrane. Acts at the same site as, but independently of, PECAM1. Homophilic adhesion molecule, but these interactions may not be required for cell aggregation. The protein is CD99 antigen-like protein 2 (CD99L2) of Pongo abelii (Sumatran orangutan).